A 354-amino-acid chain; its full sequence is S-adenosylmethionine:tRNA ribosyltransferase-isomerase (354 aa).

Belongs to the QueA family. As to quaternary structure, monomer.

Its subcellular location is the cytoplasm. It catalyses the reaction 7-aminomethyl-7-carbaguanosine(34) in tRNA + S-adenosyl-L-methionine = epoxyqueuosine(34) in tRNA + adenine + L-methionine + 2 H(+). It functions in the pathway tRNA modification; tRNA-queuosine biosynthesis. Functionally, transfers and isomerizes the ribose moiety from AdoMet to the 7-aminomethyl group of 7-deazaguanine (preQ1-tRNA) to give epoxyqueuosine (oQ-tRNA). This chain is S-adenosylmethionine:tRNA ribosyltransferase-isomerase, found in Pseudomonas fluorescens (strain ATCC BAA-477 / NRRL B-23932 / Pf-5).